Consider the following 452-residue polypeptide: Poly(A) polymerase I (452 aa).

Catalysis depends on residues aspartate 68, aspartate 70, and aspartate 150. The segment at 427–452 (EQQRLHPKPKKKYYRPRRRKTTCSAE) is disordered. A compositionally biased stretch (basic residues) spans 431-452 (LHPKPKKKYYRPRRRKTTCSAE).

This sequence belongs to the tRNA nucleotidyltransferase/poly(A) polymerase family.

It carries out the reaction RNA(n) + ATP = RNA(n)-3'-adenine ribonucleotide + diphosphate. Functionally, adds poly(A) tail to the 3' end of many RNAs, which usually targets these RNAs for decay. Plays a significant role in the global control of gene expression, through influencing the rate of transcript degradation, and in the general RNA quality control. The chain is Poly(A) polymerase I from Haemophilus influenzae (strain ATCC 51907 / DSM 11121 / KW20 / Rd).